The sequence spans 936 residues: Myocardin-related transcription factor A (936 aa).

RPEL repeat units lie at residues 15-40 (TVLQLKLQQRRTREELENQGIMPPLK), 59-84 (DYLKRKIRSRPERAELVRMHILEETS), and 103-128 (DDLNEKISQRPGPMELVVKNILPVET). Residues 62-100 (KRKIRSRPERAELVRMHILEETSAEPSLQAKQIKLKRAR) carry the Bipartite Nuclear localization signal motif. Disordered stretches follow at residues 146–185 (SSFDEDSSDALSPEQPASQESQGSIPSPIENRPSETTQIP), 234–258 (SQPKPSFEKSQRIKKPKEPKPKVKK), and 401–422 (SQDPSTATAASAKPTPVQQAKP). Polar residues predominate over residues 160-170 (QPASQESQGSI). Positions 239 to 254 (SFEKSQRIKKPKEPKP) are enriched in basic and acidic residues. Residues 368 to 402 (LDEMKVAELKLELKHRGLPVSGTKIDLIERLKASQ) form the SAP domain. The segment covering 404–416 (PSTATAASAKPTP) has biased composition (low complexity). Residues 497–542 (DARDKDLMLREKDRQIEELTQRLKQKQELVERLRQQLEQEKRTPQH) adopt a coiled-coil conformation. The segment at 707 to 755 (HNESPATPPQQPEPEPPPHSIFLTHSSPQWSKNPPGYDEAMKQQPNSCE) is disordered. The segment covering 712 to 725 (ATPPQQPEPEPPPH) has biased composition (pro residues). Over residues 729-738 (LTHSSPQWSK) the composition is skewed to polar residues.

As to quaternary structure, interacts with srf, forming the srf-mrtfa nuclear complex which binds the 5'-CArG-3' consensus motif (CArG box) on DNA via srf. Interacts (via RPEL repeats) with globular actin (G-actin), thereby regulating its subcellular location and activity of the complex formed with srf.

It localises to the cytoplasm. Its subcellular location is the nucleus. Functionally, transcription coactivator that associates with the serum response factor (srf) transcription factor to control expression of genes regulating the cytoskeleton during development, morphogenesis and cell migration. The srf-mrtfa complex activity responds to Rho GTPase-induced changes in cellular globular actin (G-actin) concentration, thereby coupling cytoskeletal gene expression to cytoskeletal dynamics. Mrtfa binds G-actin via its RPEL repeats, regulating activity of the mrtfa-srf complex. Activity is also regulated by filamentous actin (F-actin) in the nucleus. This Xenopus laevis (African clawed frog) protein is Myocardin-related transcription factor A (mrtfa).